Reading from the N-terminus, the 108-residue chain is Putative septation protein SpoVG (108 aa).

This sequence belongs to the SpoVG family.

Its function is as follows. Could be involved in septation. The chain is Putative septation protein SpoVG from Bdellovibrio bacteriovorus (strain ATCC 15356 / DSM 50701 / NCIMB 9529 / HD100).